The chain runs to 221 residues: Small histidine-alanine-rich protein (221 aa).

An N-terminal signal peptide occupies residues 1–21; the sequence is MVSFSKNKILSAAVFASVLLL. Basic and acidic residues predominate over residues 52–67; it reads AHAGDAHHAHHVADAH. 2 disordered regions span residues 52-141 and 180-221; these read AHAG…AANA and AHHD…HLHH. 2 repeat units span residues 57-59 and 60-62. Positions 57–68 are 4 X 3 AA approximate tandem repeats of A-H-H; the sequence is AHHAHHVADAHH. A 1-3; approximate repeat occupies 63-65; sequence VAD. 13 consecutive repeat copies span residues 66–68, 69–74, 75–80, 81–86, 87–92, 93–98, 99–104, 105–110, 111–116, 117–122, 123–128, 129–134, and 135–140. Positions 69–146 are 13 X 6 AA approximate tandem repeats of A-H-H-A-A-N; sequence AHHAANAHHA…HAANAHHAAD (78 aa). The segment covering 75–141 has biased composition (low complexity); that stretch reads AHHAANAHHA…AANAHHAANA (67 aa). A 2-13; approximate repeat occupies 141–146; that stretch reads AHHAAD. 7 repeat units span residues 176–180, 181–185, 186–190, 191–195, 196–200, 201–205, and 206–210. The segment at 176-210 is 7 X 5 AA tandem repeats of H-H-D-[DG]-A; the sequence is HHDDAHHDGAHHDDAHHDGAHHDGAHHDGAHHDGA. The segment covering 180–211 has biased composition (basic and acidic residues); that stretch reads AHHDGAHHDDAHHDGAHHDGAHHDGAHHDGAH.

This Plasmodium falciparum (isolate FC27 / Papua New Guinea) protein is Small histidine-alanine-rich protein.